Here is an 855-residue protein sequence, read N- to C-terminus: Photoactivated adenylate cyclase subunit beta-like protein 1224-5/9F (855 aa).

Residues 56 to 149 (LRRLMYLSKG…GRMSGVWHMK (94 aa)) enclose the BLUF 1 domain. The interval 420 to 444 (RPPIFDDTPKCNPRPRTPGCEGRQR) is disordered. The BLUF 2 domain maps to 471–563 (VPTLTYISHA…RVYPSEWTLT (93 aa)). Positions 813 to 827 (RSGEKPLTEPEEAKL) are enriched in basic and acidic residues. Positions 813-855 (RSGEKPLTEPEEAKLDFSPGRVRHGDSGRRSNSAQGKLSIQVR) are disordered. Residues 842 to 855 (RSNSAQGKLSIQVR) are compositionally biased toward polar residues.

In terms of assembly, heterotetramer of two alpha and two beta subunits.

The protein resides in the cell projection. Its subcellular location is the cilium. The protein localises to the flagellum. The protein is Photoactivated adenylate cyclase subunit beta-like protein 1224-5/9F of Euglena gracilis.